The sequence spans 391 residues: Sulfate adenylyltransferase (391 aa).

It belongs to the sulfate adenylyltransferase family.

The enzyme catalyses sulfate + ATP + H(+) = adenosine 5'-phosphosulfate + diphosphate. The protein operates within sulfur metabolism; hydrogen sulfide biosynthesis; sulfite from sulfate: step 1/3. The sequence is that of Sulfate adenylyltransferase from Lactiplantibacillus plantarum (strain ATCC BAA-793 / NCIMB 8826 / WCFS1) (Lactobacillus plantarum).